Consider the following 406-residue polypeptide: chitinase-like effector (406 aa).

The signal sequence occupies residues 1–23; it reads MLTLLPSLILLLSTLSLSTPANA. Positions 26 to 405 constitute a GH18 domain; sequence AIAKAYYPGW…DAVRHGAGFK (380 aa). Chitin is bound by residues Tyr-138 and Trp-384.

Belongs to the glycosyl hydrolase 18 family.

It localises to the secreted. Its function is as follows. Catalytically impaired chitinase that binds efficiently to chitin, but not to chitosan, xylan, or cellulose. Despite the lack of chitinolytic activity, retains substrate binding specificity and acts as an effector to prevent chitin-triggered immunity by sequestering immunogenic chitin fragments. This is chitinase-like effector (Chi) from Moniliophthora roreri (Frosty pod rot fungus).